The sequence spans 232 residues: uncharacterized protein (232 aa).

The protein localises to the cytoplasm. It localises to the nucleus. This is an uncharacterized protein from Saccharomyces cerevisiae (strain ATCC 204508 / S288c) (Baker's yeast).